The primary structure comprises 248 residues: Ureidoacrylate amidohydrolase RutB (248 aa).

The active-site Proton acceptor is aspartate 41. Residue lysine 150 is part of the active site. The active-site Nucleophile is cysteine 183.

The protein belongs to the isochorismatase family. RutB subfamily.

The enzyme catalyses (Z)-3-ureidoacrylate + H2O + H(+) = (Z)-3-aminoacrylate + NH4(+) + CO2. The catalysed reaction is (Z)-3-ureidoacrylate + H2O = (Z)-3-aminoacrylate + carbamate + H(+). It catalyses the reaction (Z)-2-methylureidoacrylate + H2O + H(+) = (Z)-2-methylaminoacrylate + NH4(+) + CO2. Hydrolyzes ureidoacrylate to form aminoacrylate and carbamate. The carbamate hydrolyzes spontaneously, thereby releasing one of the nitrogen atoms of the pyrimidine ring as ammonia and one of its carbon atoms as CO2. This Methylorubrum extorquens (strain ATCC 14718 / DSM 1338 / JCM 2805 / NCIMB 9133 / AM1) (Methylobacterium extorquens) protein is Ureidoacrylate amidohydrolase RutB.